The sequence spans 230 residues: MNYEGKTKIVKVTGDYALLEFKDDITAGDGLKHDVLTGKGSICAETTAILMKYLSEKGIKTHLVEYIPPRTLKVIPLKMFPLEVVVRLKKAGSFVRRYGGAEGEDLPVPLVEFFIKDDERHDPMVCVDHLEILGIATKKQAEKMKEAAVKITLALKEFFERANFELWDIKYEFGLDKDGNVVLGDEISPDTFRLRKKGEIFDKDVYRRDLGDPLKKYREVLELCRSLNSQ.

It belongs to the SAICAR synthetase family.

It carries out the reaction 5-amino-1-(5-phospho-D-ribosyl)imidazole-4-carboxylate + L-aspartate + ATP = (2S)-2-[5-amino-1-(5-phospho-beta-D-ribosyl)imidazole-4-carboxamido]succinate + ADP + phosphate + 2 H(+). It functions in the pathway purine metabolism; IMP biosynthesis via de novo pathway; 5-amino-1-(5-phospho-D-ribosyl)imidazole-4-carboxamide from 5-amino-1-(5-phospho-D-ribosyl)imidazole-4-carboxylate: step 1/2. This is Phosphoribosylaminoimidazole-succinocarboxamide synthase (purC) from Thermotoga maritima (strain ATCC 43589 / DSM 3109 / JCM 10099 / NBRC 100826 / MSB8).